Consider the following 443-residue polypeptide: Thymidine phosphorylase (443 aa).

Belongs to the thymidine/pyrimidine-nucleoside phosphorylase family. As to quaternary structure, homodimer.

It carries out the reaction thymidine + phosphate = 2-deoxy-alpha-D-ribose 1-phosphate + thymine. Its pathway is pyrimidine metabolism; dTMP biosynthesis via salvage pathway; dTMP from thymine: step 1/2. The enzymes which catalyze the reversible phosphorolysis of pyrimidine nucleosides are involved in the degradation of these compounds and in their utilization as carbon and energy sources, or in the rescue of pyrimidine bases for nucleotide synthesis. The sequence is that of Thymidine phosphorylase from Shewanella sp. (strain ANA-3).